A 279-amino-acid chain; its full sequence is Oxygen-dependent coproporphyrinogen-III oxidase (279 aa).

Residue Ser-102 participates in substrate binding. 2 residues coordinate a divalent metal cation: His-106 and His-116. Residue His-116 is the Proton donor of the active site. Substrate is bound at residue 118 to 120 (NTR). Residues His-149 and His-179 each contribute to the a divalent metal cation site. The segment at 244-279 (YVEFNLLYDRGTKFGLMTDGNVEAILMSLPPEVKFN) is important for dimerization.

This sequence belongs to the aerobic coproporphyrinogen-III oxidase family. Homodimer. A divalent metal cation serves as cofactor.

The protein resides in the cytoplasm. The enzyme catalyses coproporphyrinogen III + O2 + 2 H(+) = protoporphyrinogen IX + 2 CO2 + 2 H2O. It participates in porphyrin-containing compound metabolism; protoporphyrin-IX biosynthesis; protoporphyrinogen-IX from coproporphyrinogen-III (O2 route): step 1/1. Its function is as follows. Involved in the heme biosynthesis. Catalyzes the aerobic oxidative decarboxylation of propionate groups of rings A and B of coproporphyrinogen-III to yield the vinyl groups in protoporphyrinogen-IX. The sequence is that of Oxygen-dependent coproporphyrinogen-III oxidase from Rickettsia akari (strain Hartford).